Consider the following 269-residue polypeptide: Phosphatidylglycerol--prolipoprotein diacylglyceryl transferase (269 aa).

The next 7 helical transmembrane spans lie at 17 to 37, 59 to 79, 95 to 115, 123 to 143, 181 to 201, 206 to 226, and 242 to 262; these read IGPI…MLGW, FLVW…VLFY, WQGG…IIAF, LFQV…FGRI, AGLE…LTGI, GALS…SEFF, and MGQL…AWAL. Residue Arg-142 coordinates a 1,2-diacyl-sn-glycero-3-phospho-(1'-sn-glycerol).

This sequence belongs to the Lgt family.

The protein localises to the cell inner membrane. The catalysed reaction is L-cysteinyl-[prolipoprotein] + a 1,2-diacyl-sn-glycero-3-phospho-(1'-sn-glycerol) = an S-1,2-diacyl-sn-glyceryl-L-cysteinyl-[prolipoprotein] + sn-glycerol 1-phosphate + H(+). Its pathway is protein modification; lipoprotein biosynthesis (diacylglyceryl transfer). Catalyzes the transfer of the diacylglyceryl group from phosphatidylglycerol to the sulfhydryl group of the N-terminal cysteine of a prolipoprotein, the first step in the formation of mature lipoproteins. This chain is Phosphatidylglycerol--prolipoprotein diacylglyceryl transferase, found in Paramagnetospirillum magneticum (strain ATCC 700264 / AMB-1) (Magnetospirillum magneticum).